We begin with the raw amino-acid sequence, 187 residues long: Putative adenylate kinase (187 aa).

Residues G10, G12, K13, T14, and I15 each contribute to the ATP site. The NMP stretch occupies residues 30 to 53; that stretch reads SLSQFVIENKLYTEYDELRQSYII. The LID stretch occupies residues 103-113; it reads GRGWADIKVAE. R104 is an ATP binding site.

Belongs to the adenylate kinase family. AK6 subfamily. As to quaternary structure, interacts with uS11. Not a structural component of 40S pre-ribosomes, but transiently interacts with them by binding to uS11.

The catalysed reaction is AMP + ATP = 2 ADP. It catalyses the reaction ATP + H2O = ADP + phosphate + H(+). In terms of biological role, broad-specificity nucleoside monophosphate (NMP) kinase that catalyzes the reversible transfer of the terminal phosphate group between nucleoside triphosphates and monophosphates. Also has ATPase activity. Involved in the late maturation steps of the 30S ribosomal particles, specifically 16S rRNA maturation. While NMP activity is not required for ribosome maturation, ATPase activity is. Associates transiently with small ribosomal subunit protein uS11. ATP hydrolysis breaks the interaction with uS11. May temporarily remove uS11 from the ribosome to enable a conformational change of the ribosomal RNA that is needed for the final maturation step of the small ribosomal subunit. The sequence is that of Putative adenylate kinase from Saccharolobus islandicus (strain L.S.2.15 / Lassen #1) (Sulfolobus islandicus).